Here is a 360-residue protein sequence, read N- to C-terminus: uncharacterized protein (360 aa).

The THUMP domain occupies 45 to 148 (EDIEDKILQI…KNKTYVSITP (104 aa)).

This is an uncharacterized protein from Methanocaldococcus jannaschii (strain ATCC 43067 / DSM 2661 / JAL-1 / JCM 10045 / NBRC 100440) (Methanococcus jannaschii).